A 122-amino-acid polypeptide reads, in one-letter code: Lysozyme (122 aa).

The region spanning 3–118 is the I-type lysozyme domain; that stretch reads GGIVSQRCLS…WNRLQKISGC (116 aa). 7 disulfide bridges follow: Cys10-Cys86, Cys13-Cys118, Cys15-Cys21, Cys26-Cys35, Cys48-Cys68, Cys58-Cys64, and Cys82-Cys100. Glu18 (proton donor) is an active-site residue. Residue Asp29 is the Nucleophile of the active site. 41–47 is a binding site for substrate; the sequence is KEAYWID. Residues Tyr72, His93, 93 to 95, and Lys102 contribute to the substrate site; that span reads HNG.

This sequence belongs to the glycosyl hydrolase 22 family. Type-I lysozyme subfamily. In terms of assembly, monomer.

Its subcellular location is the secreted. It carries out the reaction Hydrolysis of (1-&gt;4)-beta-linkages between N-acetylmuramic acid and N-acetyl-D-glucosamine residues in a peptidoglycan and between N-acetyl-D-glucosamine residues in chitodextrins.. Functionally, has bacteriolytic activity against Gram-positive bacteria M.luteus. Also has chitinase activity. This is Lysozyme from Meretrix lusoria (Hard clam).